Here is a 90-residue protein sequence, read N- to C-terminus: [Phe8]-phyllolitorin (90 aa).

Positions 1–30 (MSAVPFTRVLLISGFLAHLLLSTFVTLTVC) are cleaved as a signal peptide. The propeptide occupies 31–48 (KEVTEESDDLSKRNVLQR). Pyrrolidone carboxylic acid is present on glutamine 49. Methionine 57 is modified (methionine amide). A propeptide spanning residues 61 to 90 (SLENTNRRSDEDMEISALFRGSPLKVKRSD) is cleaved from the precursor.

The protein belongs to the bombesin/neuromedin-B/ranatensin family. As to expression, expressed by the skin glands.

The protein resides in the secreted. The polypeptide is [Phe8]-phyllolitorin (Phyllomedusa sauvagei (Sauvage's leaf frog)).